A 367-amino-acid polypeptide reads, in one-letter code: Probable dual-specificity RNA methyltransferase RlmN (367 aa).

Residue Glu-92 is the Proton acceptor of the active site. In terms of domain architecture, Radical SAM core spans 98–326 (QEYGLSVCVT…YDTLKKNGIN (229 aa)). A disulfide bridge links Cys-105 with Cys-341. [4Fe-4S] cluster is bound by residues Cys-112, Cys-116, and Cys-119. S-adenosyl-L-methionine is bound by residues 164-165 (GE), Ser-196, 219-221 (SLH), and Asn-297. Cys-341 serves as the catalytic S-methylcysteine intermediate.

Belongs to the radical SAM superfamily. RlmN family. [4Fe-4S] cluster is required as a cofactor.

Its subcellular location is the cytoplasm. It carries out the reaction adenosine(2503) in 23S rRNA + 2 reduced [2Fe-2S]-[ferredoxin] + 2 S-adenosyl-L-methionine = 2-methyladenosine(2503) in 23S rRNA + 5'-deoxyadenosine + L-methionine + 2 oxidized [2Fe-2S]-[ferredoxin] + S-adenosyl-L-homocysteine. The enzyme catalyses adenosine(37) in tRNA + 2 reduced [2Fe-2S]-[ferredoxin] + 2 S-adenosyl-L-methionine = 2-methyladenosine(37) in tRNA + 5'-deoxyadenosine + L-methionine + 2 oxidized [2Fe-2S]-[ferredoxin] + S-adenosyl-L-homocysteine. Its function is as follows. Specifically methylates position 2 of adenine 2503 in 23S rRNA and position 2 of adenine 37 in tRNAs. The polypeptide is Probable dual-specificity RNA methyltransferase RlmN (Listeria welshimeri serovar 6b (strain ATCC 35897 / DSM 20650 / CCUG 15529 / CIP 8149 / NCTC 11857 / SLCC 5334 / V8)).